The chain runs to 43 residues: METATLVAIFISCLLVSFTGYALYTAFGQPSRELRDPFEEHED.

Residues Val7–Phe27 form a helical membrane-spanning segment.

The protein belongs to the PsbN family.

Its subcellular location is the plastid. It is found in the chloroplast thylakoid membrane. Functionally, may play a role in photosystem I and II biogenesis. The chain is Protein PsbN from Huperzia lucidula (Shining clubmoss).